The chain runs to 207 residues: Dephospho-CoA kinase (207 aa).

Polar residues predominate over residues 1-11 (MTRSPAPSSPT). The tract at residues 1–21 (MTRSPAPSSPTHPRRLGLTGS) is disordered. Positions 15–207 (RLGLTGSIGA…DAALRQLEIT (193 aa)) constitute a DPCK domain. Residue 23-28 (GAGKST) coordinates ATP.

It belongs to the CoaE family.

Its subcellular location is the cytoplasm. The enzyme catalyses 3'-dephospho-CoA + ATP = ADP + CoA + H(+). Its pathway is cofactor biosynthesis; coenzyme A biosynthesis; CoA from (R)-pantothenate: step 5/5. Catalyzes the phosphorylation of the 3'-hydroxyl group of dephosphocoenzyme A to form coenzyme A. This chain is Dephospho-CoA kinase, found in Deinococcus radiodurans (strain ATCC 13939 / DSM 20539 / JCM 16871 / CCUG 27074 / LMG 4051 / NBRC 15346 / NCIMB 9279 / VKM B-1422 / R1).